The chain runs to 1589 residues: Centrosomal protein of 170 kDa protein B (1589 aa).

In terms of domain architecture, FHA spans isoleucine 23 to isoleucine 73. Disordered stretches follow at residues arginine 130 to proline 261, isoleucine 287 to serine 309, leucine 325 to arginine 388, and phenylalanine 409 to glutamate 583. Basic and acidic residues-rich tracts occupy residues arginine 147–glycine 156 and proline 243–glutamate 253. Over residues glycine 330–valine 344 the composition is skewed to basic and acidic residues. A phosphoserine mark is found at serine 360 and serine 421. Composition is skewed to basic and acidic residues over residues proline 430–proline 446 and leucine 467–leucine 476. Residues serine 478–proline 489 show a composition bias toward low complexity. Residues serine 480 and serine 492 each carry the phosphoserine modification. A compositionally biased stretch (pro residues) spans glutamate 520–leucine 530. A Phosphoserine modification is found at serine 536. The segment covering valine 538–threonine 548 has biased composition (pro residues). Phosphothreonine is present on threonine 542. Phosphoserine occurs at positions 597, 619, 655, 711, 721, 746, 748, 751, 753, 772, 829, 853, 954, 972, 986, and 988. 4 disordered regions span residues proline 598–leucine 895, aspartate 934–phenylalanine 1316, aspartate 1350–serine 1374, and alanine 1532–alanine 1552. Low complexity predominate over residues serine 711 to glycine 722. Over residues aspartate 957–serine 972 the composition is skewed to polar residues. Over residues serine 1029–arginine 1038 the composition is skewed to basic residues. Phosphoserine occurs at positions 1135, 1179, and 1199. Over residues alanine 1221–proline 1230 the composition is skewed to polar residues. A compositionally biased stretch (low complexity) spans proline 1286–proline 1301. A Phosphothreonine modification is found at threonine 1304. Serine 1356 and serine 1362 each carry phosphoserine. The span at alanine 1363 to serine 1374 shows a compositional bias: polar residues. The segment covering alanine 1542–alanine 1552 has biased composition (low complexity). Serine 1545 and serine 1548 each carry phosphoserine.

This sequence belongs to the CEP170 family.

The protein localises to the cytoplasm. It localises to the cytoskeleton. Plays a role in microtubule organization. This Homo sapiens (Human) protein is Centrosomal protein of 170 kDa protein B (CEP170B).